A 112-amino-acid polypeptide reads, in one-letter code: Prothymosin alpha (112 aa).

The residue at position 1 (Met-1) is an N-acetylmethionine. The tract at residues 1-112 (MSDAAVDTSS…KKQKKTDEDD (112 aa)) is disordered. Ser-2 is subject to N-acetylserine; in Prothymosin alpha, N-terminally processed. Ser-2 carries the post-translational modification Phosphoserine. Position 8 is a phosphothreonine (Thr-8). Ser-9 and Ser-10 each carry phosphoserine. Phosphothreonine is present on residues Thr-13 and Thr-14. A compositionally biased stretch (basic and acidic residues) spans 13–31 (TTKDLKEKKEVVEEAENGR). Residue Lys-15 is modified to N6-acetyllysine; alternate. Residue Lys-15 is modified to N6-succinyllysine; alternate. Residues 43–84 (ENGEQEADNEVDEEEEEGGEEEEEEEEGDGEEEDGDEDEEAE) are compositionally biased toward acidic residues. Basic and acidic residues predominate over residues 101–112 (ETKKQKKTDEDD). Thr-102 bears the Phosphothreonine mark. Position 103 is an N6-acetyllysine; alternate (Lys-103). Lys-103 participates in a covalent cross-link: Glycyl lysine isopeptide (Lys-Gly) (interchain with G-Cter in SUMO2); alternate. Thr-108 is modified (phosphothreonine).

Belongs to the pro/parathymosin family. Interacts with NUPR1; regulates apoptotic process. Covalently linked to a small RNA of about 20 nucleotides.

It is found in the nucleus. Its function is as follows. Prothymosin alpha may mediate immune function by conferring resistance to certain opportunistic infections. The polypeptide is Prothymosin alpha (Ptma) (Rattus norvegicus (Rat)).